A 210-amino-acid chain; its full sequence is Glutathione S-transferase P (210 aa).

A GST N-terminal domain is found at 2-81; that stretch reads PPYTVVYFPV…HLGRTLGLYG (80 aa). Position 4 is a phosphotyrosine; by EGFR (tyrosine 4). Residues tyrosine 8, arginine 14, tryptophan 39, lysine 45, and 52–53 each bind glutathione; that span reads QL. Residue threonine 62 is modified to Phosphothreonine. A glutathione-binding site is contributed by 65–66; that stretch reads QS. One can recognise a GST C-terminal domain in the interval 83–204; the sequence is DQREAALVDM…ASPEHVNLPI (122 aa). Residues lysine 103 and lysine 116 each carry the N6-succinyllysine modification. Lysine 128 is subject to N6-acetyllysine.

Belongs to the GST superfamily. Pi family. Homodimer. Interacts with CDK5.

Its subcellular location is the cytoplasm. The protein localises to the mitochondrion. It localises to the nucleus. It catalyses the reaction RX + glutathione = an S-substituted glutathione + a halide anion + H(+). The catalysed reaction is prostaglandin J2 + glutathione = prostaglandin J2-S-(R)-glutathione. It carries out the reaction prostaglandin J2 + glutathione = prostaglandin J2-S-(S)-glutathione. The enzyme catalyses prostaglandin A2 + glutathione = prostaglandin A2-S-(S)-glutathione. It catalyses the reaction 11(S)-hydroxy-14(S),15(S)-epoxy-(5Z,8Z,12E)-eicosatrienoate + glutathione = (11S,15S)-dihydroxy-14(R)-S-glutathionyl-(5Z,8Z,12E)-eicosatrienoate. Functionally, conjugation of reduced glutathione to a wide number of exogenous and endogenous hydrophobic electrophiles. Involved in the formation of glutathione conjugates of both prostaglandin A2 (PGA2) and prostaglandin J2 (PGJ2). Participates in the formation of novel hepoxilin regioisomers. Negatively regulates CDK5 activity via p25/p35 translocation to prevent neurodegeneration. The polypeptide is Glutathione S-transferase P (GSTP1) (Pongo abelii (Sumatran orangutan)).